Reading from the N-terminus, the 138-residue chain is ATP synthase epsilon chain (138 aa).

The protein belongs to the ATPase epsilon chain family. F-type ATPases have 2 components, CF(1) - the catalytic core - and CF(0) - the membrane proton channel. CF(1) has five subunits: alpha(3), beta(3), gamma(1), delta(1), epsilon(1). CF(0) has three main subunits: a, b and c.

It is found in the cell inner membrane. Produces ATP from ADP in the presence of a proton gradient across the membrane. The polypeptide is ATP synthase epsilon chain (Endomicrobium trichonymphae).